A 121-amino-acid chain; its full sequence is MMSMRSRRSMFIEHFNELMMRVQRPPTLLLILLVANAFSKPIGTPMPEHCSTLVGREFQSCIRQAQFDTAGMYTNRVIVLDRARTHRYPIDRDTTTAHDTSYDTSDPQLLSDIGYSFDYGK.

A signal peptide spans 1 to 39; sequence MMSMRSRRSMFIEHFNELMMRVQRPPTLLLILLVANAFS.

The chain is Non-structural protein 3a from Bat coronavirus HKU5 (BtCoV).